Here is a 207-residue protein sequence, read N- to C-terminus: Cytochrome c biogenesis ATP-binding export protein CcmA (207 aa).

The 204-residue stretch at 4–207 (LEVRELLCER…RISLTQTRAV (204 aa)) folds into the ABC transporter domain. 36-43 (GSNGAGKT) contacts ATP.

It belongs to the ABC transporter superfamily. CcmA exporter (TC 3.A.1.107) family. In terms of assembly, the complex is composed of two ATP-binding proteins (CcmA) and two transmembrane proteins (CcmB).

The protein resides in the cell inner membrane. It carries out the reaction heme b(in) + ATP + H2O = heme b(out) + ADP + phosphate + H(+). Functionally, part of the ABC transporter complex CcmAB involved in the biogenesis of c-type cytochromes; once thought to export heme, this seems not to be the case, but its exact role is uncertain. Responsible for energy coupling to the transport system. The sequence is that of Cytochrome c biogenesis ATP-binding export protein CcmA from Escherichia coli O157:H7.